The chain runs to 430 residues: Enolase (430 aa).

Gln-168 is a (2R)-2-phosphoglycerate binding site. The active-site Proton donor is the Glu-210. 3 residues coordinate Mg(2+): Asp-247, Glu-288, and Asp-315. The (2R)-2-phosphoglycerate site is built by Lys-340, Arg-369, Ser-370, and Lys-391. Catalysis depends on Lys-340, which acts as the Proton acceptor.

The protein belongs to the enolase family. Mg(2+) serves as cofactor.

Its subcellular location is the cytoplasm. The protein resides in the secreted. It is found in the cell surface. It carries out the reaction (2R)-2-phosphoglycerate = phosphoenolpyruvate + H2O. Its pathway is carbohydrate degradation; glycolysis; pyruvate from D-glyceraldehyde 3-phosphate: step 4/5. Functionally, catalyzes the reversible conversion of 2-phosphoglycerate (2-PG) into phosphoenolpyruvate (PEP). It is essential for the degradation of carbohydrates via glycolysis. This chain is Enolase, found in Picosynechococcus sp. (strain ATCC 27264 / PCC 7002 / PR-6) (Agmenellum quadruplicatum).